The chain runs to 380 residues: Cytochrome b (380 aa).

The next 4 membrane-spanning stretches (helical) occupy residues 34–54, 78–99, 114–134, and 179–199; these read FGSL…LLAM, WLIR…YLHI, WNTG…GYVL, and FFAL…IHLT. The heme b site is built by His-84 and His-98. The heme b site is built by His-183 and His-197. Position 202 (His-202) interacts with a ubiquinone. The next 4 helical transmembrane spans lie at 227–247, 289–309, 321–341, and 348–368; these read LKDI…ALFS, LGGV…PFLH, LSQL…WVGS, and FIII…ILFP.

The protein belongs to the cytochrome b family. The cytochrome bc1 complex contains 11 subunits: 3 respiratory subunits (MT-CYB, CYC1 and UQCRFS1), 2 core proteins (UQCRC1 and UQCRC2) and 6 low-molecular weight proteins (UQCRH/QCR6, UQCRB/QCR7, UQCRQ/QCR8, UQCR10/QCR9, UQCR11/QCR10 and a cleavage product of UQCRFS1). This cytochrome bc1 complex then forms a dimer. Heme b serves as cofactor.

It is found in the mitochondrion inner membrane. In terms of biological role, component of the ubiquinol-cytochrome c reductase complex (complex III or cytochrome b-c1 complex) that is part of the mitochondrial respiratory chain. The b-c1 complex mediates electron transfer from ubiquinol to cytochrome c. Contributes to the generation of a proton gradient across the mitochondrial membrane that is then used for ATP synthesis. In Daption capense (Cape petrel), this protein is Cytochrome b (MT-CYB).